The following is a 120-amino-acid chain: NLYQFGKMINHMVGKSPIFSYGDYGCYCGWGGKGTPVDATDRCCFVHDCCYGRANGCDPKLSTYSYNFQNGNIVCGNKYGCLRHICECDRVAAICFGENVNTYDKKFLSSSRCRQTSEQC.

Intrachain disulfides connect Cys-26-Cys-113, Cys-28-Cys-44, Cys-43-Cys-95, Cys-49-Cys-120, Cys-50-Cys-88, Cys-57-Cys-81, and Cys-75-Cys-86. Ca(2+) contacts are provided by Tyr-27, Gly-29, and Gly-31. Residue His-47 is part of the active site. Ca(2+) is bound at residue Asp-48. Residue Asp-89 is part of the active site.

This sequence belongs to the phospholipase A2 family. Group II subfamily. D49 sub-subfamily. As to quaternary structure, monomer. Requires Ca(2+) as cofactor. In terms of tissue distribution, expressed by the venom gland.

Its subcellular location is the secreted. It catalyses the reaction a 1,2-diacyl-sn-glycero-3-phosphocholine + H2O = a 1-acyl-sn-glycero-3-phosphocholine + a fatty acid + H(+). In terms of biological role, basic phospholipase A2 that inhibits ADP-, thrombin- and arachidonic acid-induced platelet aggregation. It also exhibits anticoagulant effects upon human plasma in vitro. It induces a high hemolytic activity reaching its maximum after 24 hours. It induces a marked elevation of plasmatic levels of interleukin-6 and -10, eosinophil peroxidase and complement lytic activities and it also provokes a drastic increase of lymphocytes, monocytes and neutrophils in peripheral blood accompanied by a rapid intense migration of neutrophils to the peritoneal cavity. PLA2 catalyzes the calcium-dependent hydrolysis of the 2-acyl groups in 3-sn-phosphoglycerides. In Cerastes cerastes (Horned desert viper), this protein is Basic phospholipase A2 Cc2-PLA2.